The chain runs to 985 residues: Guanine nucleotide exchange protein smcr8b (985 aa).

The region spanning 47–225 (ISSAKLKKDF…VKCSSEREPI (179 aa)) is the uDENN FLCN/SMCR8-type domain. Residues 242 to 292 (NEKSSHTDEISPQEKDGCGNSRKVEVKLENENRSHFEHEQYGKQRKDKPDK) show a composition bias toward basic and acidic residues. Disordered stretches follow at residues 242–301 (NEKS…PLAN), 502–528 (QSQV…SPAE), and 639–659 (EESP…EDNN). Positions 390–895 (RLKTLEELCD…LINLLVEPKS (506 aa)) constitute a cDENN FLCN/SMCR8-type domain. Over residues 502 to 514 (QSQVQHSTLNTPS) the composition is skewed to polar residues. One can recognise a dDENN FLCN/SMCR8-type domain in the interval 904 to 962 (FTFAQSVQSKLVTKAFLLTFSHGHPSPSRPQGSSGTECFLSELHTDDKKILRYLSELIK).

Belongs to the SMCR8 family. Component of the C9orf72-SMCR8 complex. The C9orf72-SMCR8 complex associates with the ATG1/ULK1 kinase complex.

The protein resides in the cytoplasm. Its subcellular location is the nucleus. Functionally, component of the C9orf72-SMCR8 complex, a complex that has guanine nucleotide exchange factor (GEF) activity and regulates autophagy. In the complex, C9orf72 and SMCR8 probably constitute the catalytic subunits that promote the exchange of GDP to GTP, converting inactive GDP-bound RAB8A and RAB39B into their active GTP-bound form, thereby promoting autophagosome maturation. The C9orf72-SMCR8 complex also acts as a negative regulator of autophagy initiation by interacting with the ATG1/ULK1 kinase complex and inhibiting its protein kinase activity. This chain is Guanine nucleotide exchange protein smcr8b (smcr8b), found in Danio rerio (Zebrafish).